Reading from the N-terminus, the 231-residue chain is MAAALRSSCAAARRLLRISPAALSTLTAASSRPAAVAPLARPIAAAAVSGGNNAFSWNLRRLFSSNEKHLPAISDPEVESAFKDLMAASWTGLPDSLVIEAKKAASKATDDKAGKEALLNVFRAAEACEEFGGVLVTLRMALDDLCGITGENVGPLPGYIEDAVKSAYKRYMKYLESFGPEENYLRKKVENELGTKMIHLKMRCSGVGSEWGKITLIGTSGISGSYVELRA.

Residues 1–63 (MAAALRSSCA…AFSWNLRRLF (63 aa)) constitute a mitochondrion transit peptide.

In terms of assembly, component of complex II composed of eight subunits in plants: four classical SDH subunits SDH1, SDH2, SDH3 and SDH4 (a flavoprotein (FP), an iron-sulfur protein (IP), and a cytochrome b composed of a large and a small subunit.), as well as four subunits unknown in mitochondria from bacteria and heterotrophic eukaryotes.

It is found in the mitochondrion inner membrane. The protein operates within carbohydrate metabolism; tricarboxylic acid cycle. In Oryza sativa subsp. japonica (Rice), this protein is Succinate dehydrogenase subunit 5, mitochondrial.